Reading from the N-terminus, the 170-residue chain is Lipoprotein signal peptidase (170 aa).

The next 3 helical transmembrane spans lie at 12 to 32, 67 to 87, and 94 to 116; these read WYWVVVLVFVADQLSKQWVLS, WQRWLFTFVAVGFSVVLSVWL, and MWRLNLAYTLVIGGALGNLIDRL. Catalysis depends on residues aspartate 123 and aspartate 141. The helical transmembrane segment at 133-153 threads the bilayer; that stretch reads HFPAFNIADSAICVGAALIIL.

This sequence belongs to the peptidase A8 family.

It localises to the cell inner membrane. It catalyses the reaction Release of signal peptides from bacterial membrane prolipoproteins. Hydrolyzes -Xaa-Yaa-Zaa-|-(S,diacylglyceryl)Cys-, in which Xaa is hydrophobic (preferably Leu), and Yaa (Ala or Ser) and Zaa (Gly or Ala) have small, neutral side chains.. Its pathway is protein modification; lipoprotein biosynthesis (signal peptide cleavage). In terms of biological role, this protein specifically catalyzes the removal of signal peptides from prolipoproteins. The protein is Lipoprotein signal peptidase of Shewanella halifaxensis (strain HAW-EB4).